Here is a 415-residue protein sequence, read N- to C-terminus: MFDRAQSTIANVDPEIWQAIQQENVRQEEHIELIASENYTSPAVMAAQGSQLTNKYAEGYPGKRYYGGCEYVDIVEQLAIDRVKALFGAEAANVQPNSGSQANQGVFFAMLKPGDTIMGMSLAHGGHLTHGSPVNMSGKWFNVVSYGLNEAEDIDYEAAEQLAHEHKPKLIVAGASAFALKIDFERLAKIAKAVGAYLMVDMAHYAGLIAAGVYPNPVPHADFVTTTTHKSLRGPRGGVILMKAEYEKQINSAIFPGIQGGPLMHVIAAKAVAFKEALSPEFKEYQQKVVENARVLAQTLVKRGLRIVSGRTESHVMLVDLRAKNITGKAAEAALGNAHITVNKNAIPNDPEKPFVTSGVRLGSPAMTTRGFGPQEAELVGNLIADVLEHPEDAATIERVRAQVAELTKRFPVYR.

(6S)-5,6,7,8-tetrahydrofolate contacts are provided by residues leucine 122 and 126-128 (GHL). Lysine 230 carries the N6-(pyridoxal phosphate)lysine modification.

Belongs to the SHMT family. Homodimer. The cofactor is pyridoxal 5'-phosphate.

Its subcellular location is the cytoplasm. The enzyme catalyses (6R)-5,10-methylene-5,6,7,8-tetrahydrofolate + glycine + H2O = (6S)-5,6,7,8-tetrahydrofolate + L-serine. The protein operates within one-carbon metabolism; tetrahydrofolate interconversion. It functions in the pathway amino-acid biosynthesis; glycine biosynthesis; glycine from L-serine: step 1/1. In terms of biological role, catalyzes the reversible interconversion of serine and glycine with tetrahydrofolate (THF) serving as the one-carbon carrier. This reaction serves as the major source of one-carbon groups required for the biosynthesis of purines, thymidylate, methionine, and other important biomolecules. Also exhibits THF-independent aldolase activity toward beta-hydroxyamino acids, producing glycine and aldehydes, via a retro-aldol mechanism. The protein is Serine hydroxymethyltransferase 1 of Burkholderia mallei (strain ATCC 23344).